The chain runs to 347 residues: KRR1 small subunit processome component homolog (347 aa).

The 71-residue stretch at 124–194 (GCDIIKIGNL…VRDIVLETMN (71 aa)) folds into the KH domain. Residues 231–246 (NKNLSKRKQPKVKKPK) are compositionally biased toward basic residues. The segment at 231 to 347 (NKNLSKRKQP…LLKANKKSKS (117 aa)) is disordered. Residues 271–304 (FLNKEQKQAKRQQERQTKQAEAAKKQDERRNKDF) adopt a coiled-coil conformation. Basic and acidic residues-rich tracts occupy residues 272–303 (LNKE…RNKD) and 318–329 (KANDNDSSDSRV). Basic residues predominate over residues 337–347 (KLLKANKKSKS).

This sequence belongs to the KRR1 family. Monomer. Component of the ribosomal small subunit (SSU) processome.

Its subcellular location is the nucleus. It localises to the nucleolus. Its function is as follows. Required for 40S ribosome biogenesis. Involved in nucleolar processing of pre-18S ribosomal RNA and ribosome assembly. Binds to RNA. Required for female germline development, cell viability during eye development and for survival of dividing cells and epithelial cells during early wing disk development. The sequence is that of KRR1 small subunit processome component homolog from Drosophila willistoni (Fruit fly).